A 414-amino-acid polypeptide reads, in one-letter code: Histidine--tRNA ligase (414 aa).

It belongs to the class-II aminoacyl-tRNA synthetase family. As to quaternary structure, homodimer.

The protein localises to the cytoplasm. It catalyses the reaction tRNA(His) + L-histidine + ATP = L-histidyl-tRNA(His) + AMP + diphosphate + H(+). The sequence is that of Histidine--tRNA ligase from Pelobacter propionicus (strain DSM 2379 / NBRC 103807 / OttBd1).